The chain runs to 1029 residues: FYVE, RhoGEF and PH domain-containing protein tag-77 (1029 aa).

Basic and acidic residues-rich tracts occupy residues 1-12 (MKYDMNHRKNSD) and 20-39 (TVKE…DNRF). Disordered regions lie at residues 1–155 (MKYD…ATSE), 185–254 (VPRM…ERKT), and 279–370 (NNGV…EKDD). A compositionally biased stretch (pro residues) spans 42–56 (QPPPPPSPRRAPPPP). 2 stretches are compositionally biased toward low complexity: residues 76 to 85 (PPSSSESSEN) and 122 to 133 (SSSTSDVSSQNS). Composition is skewed to polar residues over residues 141 to 155 (SCTT…ATSE) and 200 to 211 (PISQVSTLSQVS). Over residues 212–227 (DEFDEGDTSASDEESM) the composition is skewed to acidic residues. Over residues 316–334 (SPTSGMSSSSTDDFSRITS) the composition is skewed to low complexity. Residues 335–347 (MTSDRSSILTSHS) are compositionally biased toward polar residues. Residues 375 to 572 (KLHYAAVEFL…ENVTQAVNQK (198 aa)) enclose the DH domain. Positions 593-696 (NVLEPGRVLI…WTDDLTKAQY (104 aa)) constitute a PH domain. Cys810, Cys823, Cys826, Cys831, Cys834, Cys851, and Cys854 together coordinate Zn(2+). The FYVE-type; degenerate zinc-finger motif lies at 810–859 (CSTEFNIINRRHHCRDCGWLICKFCKGQAPLSKYDFTKQNVCSECFDRHY).

It localises to the cytoplasm. The protein resides in the cytoskeleton. Functionally, activates cdc-42, a member of the Ras-like family of Rho- and Rac proteins, by exchanging bound GDP for free GTP. May play a role in regulating the actin cytoskeleton and cell shape. Required for normal lifespan. This chain is FYVE, RhoGEF and PH domain-containing protein tag-77, found in Caenorhabditis elegans.